A 109-amino-acid polypeptide reads, in one-letter code: Spermidine export protein MdtI (109 aa).

At 1–5 the chain is on the periplasmic side; sequence MAQFE. The chain crosses the membrane as a helical span at residues 6 to 26; it reads WVHAAWLALAIVLEIVANVFL. At 27–35 the chain is on the cytoplasmic side; that stretch reads KFSDGFRRK. A helical transmembrane segment spans residues 36–56; sequence IFGLLSLAAVLAAFSALSQAV. Over 57–63 the chain is Periplasmic; that stretch reads KGIDLSV. The helical transmembrane segment at 64 to 84 threads the bilayer; sequence VYALWGGFGIAATLAAGWILF. The Cytoplasmic segment spans residues 85 to 87; that stretch reads GQR. The chain crosses the membrane as a helical span at residues 88–108; sequence LNRKGWIGLVLLLAGMIMVKL. Residue A109 is a topological domain, periplasmic.

This sequence belongs to the drug/metabolite transporter (DMT) superfamily. Small multidrug resistance (SMR) (TC 2.A.7.1) family. MdtI subfamily. In terms of assembly, forms a complex with MdtJ.

The protein resides in the cell inner membrane. In terms of biological role, catalyzes the excretion of spermidine. The protein is Spermidine export protein MdtI (mdtI) of Shigella flexneri.